The sequence spans 448 residues: Nicotinate phosphoribosyltransferase pncB1 (448 aa).

A disordered region spans residues 1-21 (MGPPPAARRREGEPDNQDPAG). A Phosphohistidine modification is found at H212. The tract at residues 353–372 (RSSYKESPGGRKEALRRSRA) is disordered.

Belongs to the NAPRTase family. Post-translationally, transiently phosphorylated on a His residue during the reaction cycle. Phosphorylation strongly increases the affinity for substrates and increases the rate of nicotinate D-ribonucleotide production. Dephosphorylation regenerates the low-affinity form of the enzyme, leading to product release.

The catalysed reaction is nicotinate + 5-phospho-alpha-D-ribose 1-diphosphate + ATP + H2O = nicotinate beta-D-ribonucleotide + ADP + phosphate + diphosphate. It participates in cofactor biosynthesis; NAD(+) biosynthesis; nicotinate D-ribonucleotide from nicotinate: step 1/1. Involved in the Preiss-Handler pathway, which is a recycling route that permits the salvage of free nicotinamide (NM) and nicotinic acid (Na) involved in the NAD biosynthesis. Catalyzes the synthesis of beta-nicotinate D-ribonucleotide from nicotinate and 5-phospho-D-ribose 1-phosphate at the expense of ATP. It is not able to use nicotinamide. PncB1 contributes to basal NAD level. The protein is Nicotinate phosphoribosyltransferase pncB1 (pncB1) of Mycobacterium tuberculosis (strain CDC 1551 / Oshkosh).